The chain runs to 59 residues: Large ribosomal subunit protein bL32c (59 aa).

Residues 1–19 are compositionally biased toward basic residues; it reads MAVPKKRTSKAKKNARKAN. The segment at 1-24 is disordered; it reads MAVPKKRTSKAKKNARKANWKNQA.

This sequence belongs to the bacterial ribosomal protein bL32 family.

It is found in the plastid. It localises to the chloroplast. The polypeptide is Large ribosomal subunit protein bL32c (rpl32) (Porphyra purpurea (Red seaweed)).